Reading from the N-terminus, the 168-residue chain is Secreted RxLR effector protein RXLR-C06 (168 aa).

The N-terminal stretch at 1-22 (MRIQLLWLSFAVLSTILSTCDA) is a signal peptide. Residues 25-52 (DKLDPQRVQPNQNGSGHNQSIRSALKTS) form a disordered region. The segment covering 32–50 (VQPNQNGSGHNQSIRSALK) has biased composition (polar residues). Asn37 and Asn42 each carry an N-linked (GlcNAc...) asparagine glycan. Positions 46–63 (RSALKTSHGKTIADDEER) match the RxLR-dEER motif. The region spanning 78 to 107 (YKAIVAKLSKYFRDYHERREIRKQRILNKS) is the IQ domain. Asn105 carries an N-linked (GlcNAc...) asparagine glycan.

Belongs to the RxLR effector family.

The protein localises to the secreted. It localises to the host Golgi apparatus. Its function is as follows. Secreted effector that suppresses pattern-triggered immunity (PTI) in plant host. The sequence is that of Secreted RxLR effector protein RXLR-C06 from Plasmopara halstedii (Downy mildew of sunflower).